We begin with the raw amino-acid sequence, 833 residues long: Ventricular zone-expressed PH domain-containing protein 1 (833 aa).

Interaction with TGFBR1 stretches follow at residues 201–319 (AELL…LANM) and 663–833 (ESTF…TTYL). Residues 716–819 (QPLIEGKLKE…WLQCINVALA (104 aa)) enclose the PH domain.

It belongs to the MELT/VEPH family. Interacts with TGFBR1. Specifically expressed in kidney and eye. In the eye, expressed in retinal pigmented epithelium but not in the neural retina.

It localises to the cell membrane. Functionally, interacts with TGF-beta receptor type-1 (TGFBR1) and inhibits dissociation of activated SMAD2 from TGFBR1, impeding its nuclear accumulation and resulting in impaired TGF-beta signaling. May also affect FOXO, Hippo and Wnt signaling. The protein is Ventricular zone-expressed PH domain-containing protein 1 (Veph1) of Mus musculus (Mouse).